Here is a 345-residue protein sequence, read N- to C-terminus: UPF0228 protein MA_2656 (345 aa).

The protein belongs to the UPF0228 family.

In Methanosarcina acetivorans (strain ATCC 35395 / DSM 2834 / JCM 12185 / C2A), this protein is UPF0228 protein MA_2656.